Here is a 229-residue protein sequence, read N- to C-terminus: Peptidase E (229 aa).

Residues S120, D135, and H157 each act as charge relay system in the active site.

The protein belongs to the peptidase S51 family.

Its subcellular location is the cytoplasm. The enzyme catalyses Dipeptidase E catalyzes the hydrolysis of dipeptides Asp-|-Xaa. It does not act on peptides with N-terminal Glu, Asn or Gln, nor does it cleave isoaspartyl peptides.. Functionally, hydrolyzes dipeptides containing N-terminal aspartate residues. May play a role in allowing the cell to use peptide aspartate to spare carbon otherwise required for the synthesis of the aspartate family of amino acids. The protein is Peptidase E of Shigella boydii serotype 18 (strain CDC 3083-94 / BS512).